The primary structure comprises 284 residues: Bifunctional protein FolD (284 aa).

Residues 166–168 (GAS) and I232 each bind NADP(+).

It belongs to the tetrahydrofolate dehydrogenase/cyclohydrolase family. As to quaternary structure, homodimer.

The catalysed reaction is (6R)-5,10-methylene-5,6,7,8-tetrahydrofolate + NADP(+) = (6R)-5,10-methenyltetrahydrofolate + NADPH. It carries out the reaction (6R)-5,10-methenyltetrahydrofolate + H2O = (6R)-10-formyltetrahydrofolate + H(+). It participates in one-carbon metabolism; tetrahydrofolate interconversion. Its function is as follows. Catalyzes the oxidation of 5,10-methylenetetrahydrofolate to 5,10-methenyltetrahydrofolate and then the hydrolysis of 5,10-methenyltetrahydrofolate to 10-formyltetrahydrofolate. The sequence is that of Bifunctional protein FolD from Shewanella sediminis (strain HAW-EB3).